Consider the following 175-residue polypeptide: Keratin-associated protein 13-2 (175 aa).

A run of 5 repeats spans residues 46–55 (CQLGSSLYRG), 56–65 (CQEICWEPTS), 66–75 (CQTSYVESSP), 76–85 (CQTSCYRPRT), and 92–101 (CKTTYSGSLG). The interval 46-101 (CQLGSSLYRGCQEICWEPTSCQTSYVESSPCQTSCYRPRTSLLCSPCKTTYSGSLG) is 5 X 10 AA approximate repeats.

It belongs to the PMG family. In terms of assembly, interacts with hair keratins.

In terms of biological role, in the hair cortex, hair keratin intermediate filaments are embedded in an interfilamentous matrix, consisting of hair keratin-associated proteins (KRTAP), which are essential for the formation of a rigid and resistant hair shaft through their extensive disulfide bond cross-linking with abundant cysteine residues of hair keratins. The matrix proteins include the high-sulfur and high-glycine-tyrosine keratins. The polypeptide is Keratin-associated protein 13-2 (KRTAP13-2) (Homo sapiens (Human)).